A 43-amino-acid polypeptide reads, in one-letter code: Potassium channel toxin gamma-KTx 4.7 (43 aa).

Disulfide bonds link Cys5-Cys23, Cys11-Cys34, Cys20-Cys39, and Cys24-Cys41.

Belongs to the ergtoxin family. Gamma-KTx 4 subfamily. As to expression, expressed by the venom gland.

It is found in the secreted. Its function is as follows. Reversibly blocks Kv11/ERG potassium channels. The chain is Potassium channel toxin gamma-KTx 4.7 from Centruroides limpidus (Mexican scorpion).